The primary structure comprises 400 residues: Elongation factor Tu (400 aa).

A tr-type G domain is found at 10–208 (KPHLNVGTIG…TMDEYFPEPQ (199 aa)). Positions 19–26 (GHIDHGKT) are G1. GTP is bound at residue 19–26 (GHIDHGKT). Thr-26 lines the Mg(2+) pocket. The G2 stretch occupies residues 60 to 64 (GITIN). Positions 81–84 (DCPG) are G3. Residues 81 to 85 (DCPGH) and 136 to 139 (NKTD) contribute to the GTP site. Residues 136-139 (NKTD) form a G4 region. Positions 174-176 (SAL) are G5.

This sequence belongs to the TRAFAC class translation factor GTPase superfamily. Classic translation factor GTPase family. EF-Tu/EF-1A subfamily. In terms of assembly, monomer.

The protein resides in the cytoplasm. The enzyme catalyses GTP + H2O = GDP + phosphate + H(+). GTP hydrolase that promotes the GTP-dependent binding of aminoacyl-tRNA to the A-site of ribosomes during protein biosynthesis. The chain is Elongation factor Tu from Thermosipho melanesiensis (strain DSM 12029 / CIP 104789 / BI429).